Reading from the N-terminus, the 185-residue chain is MKQLLDFIPLILFFITYKLGGVREAAIVLVVATILQIVILKWKYGTVEKQQKIMASAVVFFGLLTAYFNEIRYLQWKVTIINGLFAIVLLIAQFQFKTPLIKKLLGKELQLPEKAWNTLNFGWAIFFIICMLVNIYISHNMSEEAWVDFKSFGIIGMTVIATIISGVYIYRYLPKDGSNSKDGEK.

Helical transmembrane passes span 19–39, 53–73, 76–96, 118–138, and 149–169; these read LGGVREAAIVLVVATILQIVI, IMASAVVFFGLLTAYFNEIRY, WKVTIINGLFAIVLLIAQFQF, TLNFGWAIFFIICMLVNIYIS, and FKSFGIIGMTVIATIISGVYI.

This sequence belongs to the YciB family.

The protein localises to the cell inner membrane. Functionally, plays a role in cell envelope biogenesis, maintenance of cell envelope integrity and membrane homeostasis. The protein is Inner membrane-spanning protein YciB of Haemophilus influenzae (strain PittEE).